The primary structure comprises 227 residues: Glutathione S-transferase U27 (227 aa).

Residues 4–84 (EEVVVLNFWP…YIDEVWKDDK (81 aa)) enclose the GST N-terminal domain. Glutathione contacts are provided by residues 14–15 (SM), 41–42 (QK), 55–56 (KI), and 68–69 (ES). In terms of domain architecture, GST C-terminal spans 92–217 (DPYQKSQCRF…LKIFDRVTQI (126 aa)).

Belongs to the GST superfamily. Tau family.

Its subcellular location is the cytoplasm. It localises to the cytosol. It catalyses the reaction RX + glutathione = an S-substituted glutathione + a halide anion + H(+). Functionally, may be involved in the conjugation of reduced glutathione to a wide number of exogenous and endogenous hydrophobic electrophiles and have a detoxification role against certain herbicides. This is Glutathione S-transferase U27 (GSTU27) from Arabidopsis thaliana (Mouse-ear cress).